The following is a 120-amino-acid chain: MAENVTSAKATAFQVRIAPRKARLVLDTVRGKSVNEAYAILKFLPNTGTEPVYKVLNSAVANAENNFALDRADLVIKEAYANEGPTMKRFRPRAKGTASKINKRTSHITIVVSENDKKGA.

Belongs to the universal ribosomal protein uL22 family. As to quaternary structure, part of the 50S ribosomal subunit.

Functionally, this protein binds specifically to 23S rRNA; its binding is stimulated by other ribosomal proteins, e.g. L4, L17, and L20. It is important during the early stages of 50S assembly. It makes multiple contacts with different domains of the 23S rRNA in the assembled 50S subunit and ribosome. The globular domain of the protein is located near the polypeptide exit tunnel on the outside of the subunit, while an extended beta-hairpin is found that lines the wall of the exit tunnel in the center of the 70S ribosome. This chain is Large ribosomal subunit protein uL22, found in Oenococcus oeni (strain ATCC BAA-331 / PSU-1).